A 404-amino-acid chain; its full sequence is Probable sugar efflux transporter (404 aa).

The next 12 membrane-spanning stretches (helical) occupy residues 15-35, 51-71, 85-105, 109-129, 137-157, 168-188, 209-229, 245-265, 276-296, 299-319, 333-353, and 363-383; these read VITF…PVAL, GLII…FMLL, LVLF…WVLV, IGVA…VIRV, QAIG…LPLG, ATFA…YQLL, PLLL…FTAY, SMAT…SLLF, FILF…IASQ, WTMF…GLGL, VAMA…ALLG, and AYIG…FILV.

This sequence belongs to the major facilitator superfamily. SotB (TC 2.A.1.2) family.

The protein resides in the cell inner membrane. Involved in the efflux of sugars. The physiological role may be the reduction of the intracellular concentration of toxic sugars or sugar metabolites. The chain is Probable sugar efflux transporter from Pasteurella multocida (strain Pm70).